Consider the following 1183-residue polypeptide: DNA-directed RNA polymerase subunit beta (1183 aa).

The segment covering 1151-1162 (EIEMADVDDEDA) has biased composition (acidic residues). The segment at 1151–1183 (EIEMADVDDEDAAERKVDLQQKSAPESQKETTD) is disordered.

This sequence belongs to the RNA polymerase beta chain family. As to quaternary structure, the RNAP catalytic core consists of 2 alpha, 1 beta, 1 beta' and 1 omega subunit. When a sigma factor is associated with the core the holoenzyme is formed, which can initiate transcription.

It carries out the reaction RNA(n) + a ribonucleoside 5'-triphosphate = RNA(n+1) + diphosphate. DNA-dependent RNA polymerase catalyzes the transcription of DNA into RNA using the four ribonucleoside triphosphates as substrates. The sequence is that of DNA-directed RNA polymerase subunit beta from Staphylococcus epidermidis (strain ATCC 12228 / FDA PCI 1200).